The primary structure comprises 465 residues: Zinc finger and BTB domain-containing protein 32 (465 aa).

One can recognise a BTB domain in the interval cysteine 29 to proline 87. Disordered regions lie at residues arginine 111–glycine 179 and glutamine 285–isoleucine 310. Basic and acidic residues-rich tracts occupy residues proline 123–glutamate 139 and glutamate 147–glutamate 176. 3 C2H2-type zinc fingers span residues tyrosine 350–histidine 372, phenylalanine 378–histidine 400, and tyrosine 405–histidine 427.

It belongs to the krueppel C2H2-type zinc-finger protein family. In terms of assembly, homodimer (via PTB domain). Interacts with the N-terminal of FANCC. Interacts with ZBTB16. Interacts with GATA3. In terms of tissue distribution, isoform 1 is testis-specific and is not expressed in lymphoid organs such as thymus or spleen. Isoform 2 is expressed in both B- and T-lymphoid cells.

The protein localises to the nucleus. DNA-binding protein that binds to the to a 5'-TGTACAGTGT-3' core sequence. May function as a transcriptional transactivator and transcriptional repressor. Probably exerts its repressor effect by preventing GATA3 from binding to DNA. May play a role in regulating the differentiation and activation of helper T-cells. This chain is Zinc finger and BTB domain-containing protein 32 (Zbtb32), found in Mus musculus (Mouse).